A 397-amino-acid polypeptide reads, in one-letter code: Tryptophan synthase beta chain (397 aa).

Lysine 87 is modified (N6-(pyridoxal phosphate)lysine).

Belongs to the TrpB family. In terms of assembly, tetramer of two alpha and two beta chains. The cofactor is pyridoxal 5'-phosphate.

It catalyses the reaction (1S,2R)-1-C-(indol-3-yl)glycerol 3-phosphate + L-serine = D-glyceraldehyde 3-phosphate + L-tryptophan + H2O. The protein operates within amino-acid biosynthesis; L-tryptophan biosynthesis; L-tryptophan from chorismate: step 5/5. In terms of biological role, the beta subunit is responsible for the synthesis of L-tryptophan from indole and L-serine. The chain is Tryptophan synthase beta chain from Escherichia coli O17:K52:H18 (strain UMN026 / ExPEC).